The following is a 144-amino-acid chain: Small ribosomal subunit protein uS11 (144 aa).

A disordered region spans residues 123–144; that stretch reads EDVTPVPTDSTRRKGSRRGRRL. Over residues 135-144 the composition is skewed to basic residues; that stretch reads RKGSRRGRRL.

Belongs to the universal ribosomal protein uS11 family.

The polypeptide is Small ribosomal subunit protein uS11 (RPS14) (Trypanosoma brucei brucei).